Consider the following 144-residue polypeptide: 3-hydroxyacyl-[acyl-carrier-protein] dehydratase FabZ (144 aa).

Residue His51 is part of the active site.

This sequence belongs to the thioester dehydratase family. FabZ subfamily.

The protein localises to the cytoplasm. It catalyses the reaction a (3R)-hydroxyacyl-[ACP] = a (2E)-enoyl-[ACP] + H2O. In terms of biological role, involved in unsaturated fatty acids biosynthesis. Catalyzes the dehydration of short chain beta-hydroxyacyl-ACPs and long chain saturated and unsaturated beta-hydroxyacyl-ACPs. In Clostridium botulinum (strain Loch Maree / Type A3), this protein is 3-hydroxyacyl-[acyl-carrier-protein] dehydratase FabZ.